The sequence spans 292 residues: NAD(P)H-hydrate epimerase (292 aa).

Residues 1–52 constitute a mitochondrion transit peptide; it reads MYGLRTLFSLGLLVGGARLGARVAQVGALGGTCPLGQGLVADGNSQCKQFRT. In terms of domain architecture, YjeF N-terminal spans 68–279; the sequence is AQAVDEELFN…ALEKKYSLNL (212 aa). Position 122–126 (122–126) interacts with (6S)-NADPHX; sequence NNGGD. Residues Asn-123 and Asp-189 each coordinate K(+). (6S)-NADPHX is bound by residues 193 to 199 and Asp-222; that span reads GFSFKGA. K(+) is bound at residue Ser-225.

The protein belongs to the NnrE/AIBP family. Requires K(+) as cofactor.

Its subcellular location is the mitochondrion. The protein localises to the secreted. The enzyme catalyses (6R)-NADHX = (6S)-NADHX. It catalyses the reaction (6R)-NADPHX = (6S)-NADPHX. Catalyzes the epimerization of the S- and R-forms of NAD(P)HX, a damaged form of NAD(P)H that is a result of enzymatic or heat-dependent hydration. This is a prerequisite for the S-specific NAD(P)H-hydrate dehydratase to allow the repair of both epimers of NAD(P)HX. The protein is NAD(P)H-hydrate epimerase of Xenopus tropicalis (Western clawed frog).